The chain runs to 138 residues: uncharacterized protein (138 aa).

The disordered stretch occupies residues 84–104 (PPKKTSPATSSSLKPRPGPRG). Residues 85 to 98 (PKKTSPATSSSLKP) are compositionally biased toward low complexity.

This sequence to M.pneumoniae MPN_413 and MPN_463.

This is an uncharacterized protein from Mycoplasma pneumoniae (strain ATCC 29342 / M129 / Subtype 1) (Mycoplasmoides pneumoniae).